Here is a 466-residue protein sequence, read N- to C-terminus: Soluble pyridine nucleotide transhydrogenase (466 aa).

36-45 (ERYHNVGGGC) is an FAD binding site.

Belongs to the class-I pyridine nucleotide-disulfide oxidoreductase family. Requires FAD as cofactor.

The protein resides in the cytoplasm. The catalysed reaction is NAD(+) + NADPH = NADH + NADP(+). Its function is as follows. Conversion of NADPH, generated by peripheral catabolic pathways, to NADH, which can enter the respiratory chain for energy generation. This is Soluble pyridine nucleotide transhydrogenase from Salmonella paratyphi A (strain ATCC 9150 / SARB42).